The following is a 383-amino-acid chain: S-adenosylmethionine synthase 1 (383 aa).

Residue His-15 coordinates ATP. Residue Asp-17 coordinates Mg(2+). Glu-43 serves as a coordination point for K(+). Glu-56 and Gln-99 together coordinate L-methionine. The interval 99–109 (QSPDIDLGVSR) is flexible loop. ATP contacts are provided by residues 162–164 (DGK), 228–229 (RF), Asp-237, 243–244 (RK), Ala-260, and Lys-264. Position 237 (Asp-237) interacts with L-methionine. Lys-268 lines the L-methionine pocket.

Belongs to the AdoMet synthase family. Homotetramer; dimer of dimers. The cofactor is Mg(2+). It depends on K(+) as a cofactor.

The protein resides in the cytoplasm. It carries out the reaction L-methionine + ATP + H2O = S-adenosyl-L-methionine + phosphate + diphosphate. Its pathway is amino-acid biosynthesis; S-adenosyl-L-methionine biosynthesis; S-adenosyl-L-methionine from L-methionine: step 1/1. In terms of biological role, catalyzes the formation of S-adenosylmethionine (AdoMet) from methionine and ATP. The overall synthetic reaction is composed of two sequential steps, AdoMet formation and the subsequent tripolyphosphate hydrolysis which occurs prior to release of AdoMet from the enzyme. This is S-adenosylmethionine synthase 1 from Rhodospirillum rubrum (strain ATCC 11170 / ATH 1.1.1 / DSM 467 / LMG 4362 / NCIMB 8255 / S1).